A 253-amino-acid chain; its full sequence is 5-oxoprolinase subunit A (253 aa).

It belongs to the LamB/PxpA family. As to quaternary structure, forms a complex composed of PxpA, PxpB and PxpC.

The catalysed reaction is 5-oxo-L-proline + ATP + 2 H2O = L-glutamate + ADP + phosphate + H(+). Its function is as follows. Catalyzes the cleavage of 5-oxoproline to form L-glutamate coupled to the hydrolysis of ATP to ADP and inorganic phosphate. The sequence is that of 5-oxoprolinase subunit A from Chloroflexus aurantiacus (strain ATCC 29364 / DSM 637 / Y-400-fl).